Here is an 88-residue protein sequence, read N- to C-terminus: Large ribosomal subunit protein eL31 (88 aa).

Belongs to the eukaryotic ribosomal protein eL31 family.

This chain is Large ribosomal subunit protein eL31 (rpl31e), found in Sulfurisphaera tokodaii (strain DSM 16993 / JCM 10545 / NBRC 100140 / 7) (Sulfolobus tokodaii).